We begin with the raw amino-acid sequence, 332 residues long: Heterogeneous nuclear ribonucleoprotein A/B (332 aa).

The segment at M1 to E66 is disordered. Over residues G29–G49 the composition is skewed to low complexity. RRM domains lie at G69 to K154 and K153 to E233. Position 81 is a phosphoserine (S81). Residues K130 and K203 each participate in a glycyl lysine isopeptide (Lys-Gly) (interchain with G-Cter in SUMO2) cross-link. K215 carries the N6-acetyllysine modification. Positions Y235–W268 are disordered. Residue S242 is modified to Phosphoserine. A Dimethylated arginine; alternate modification is found at R245. Residue R245 is modified to Omega-N-methylarginine; alternate. Residues R250, G251, R253, and G254 each carry the omega-N-methylarginine modification. Over residues R253 to Q264 the composition is skewed to gly residues. Phosphoserine is present on residues S255 and G256. N6-acetyllysine occurs at positions 271, 272, and 318. A disordered region spans residues Q311–Y332. A Dimethylated arginine; alternate modification is found at R322. At R322 the chain carries Omega-N-methylarginine; alternate. An Asymmetric dimethylarginine; alternate modification is found at R322.

In terms of assembly, identified in a IGF2BP1-dependent mRNP granule complex containing untranslated mRNAs. Interacts with APOBEC1. Post-translationally, dimethylation at Arg-322 is probably asymmetric. Ubiquitous.

The protein resides in the nucleus. It is found in the cytoplasm. Its function is as follows. Binds single-stranded RNA. Has a high affinity for G-rich and U-rich regions of hnRNA. Also binds to APOB mRNA transcripts around the RNA editing site. The sequence is that of Heterogeneous nuclear ribonucleoprotein A/B (HNRNPAB) from Homo sapiens (Human).